Consider the following 125-residue polypeptide: Calcitonin receptor-stimulating peptide 1 (125 aa).

An N-terminal signal peptide occupies residues 1–25 (MGFWKFPPFLVLSILVLYQAGMFHA). The propeptide occupies 26–77 (APFRSVFDGRFDPATLDEEESRLLLAAMVNDYEQMRTRESEKAQKTEGSRIQ). Cysteines 81 and 86 form a disulfide.

This sequence belongs to the calcitonin family.

Its subcellular location is the secreted. In terms of biological role, stimulates cAMP production via the calcitonin receptor (CT) but not via the CT-like (CL) receptor. This Ovis aries (Sheep) protein is Calcitonin receptor-stimulating peptide 1 (CRSP1).